We begin with the raw amino-acid sequence, 198 residues long: Recombination protein RecR (198 aa).

The C4-type zinc finger occupies 56 to 71 (CTECRDFSETKICAIC). The Toprim domain occupies 79 to 174 (HQLCVVESPP…RPSRLAQGLP (96 aa)).

Belongs to the RecR family.

Its function is as follows. May play a role in DNA repair. It seems to be involved in an RecBC-independent recombinational process of DNA repair. It may act with RecF and RecO. This is Recombination protein RecR from Xylella fastidiosa (strain Temecula1 / ATCC 700964).